Reading from the N-terminus, the 254-residue chain is MAGHSKWANIKRQKARVDAKKGAVFARLSRAIIVAARHGIPDPEGNFQLRSAIEKAKAAGIPNDNIERAIAKGAGKLGADSELEEIRYEGYGLGGVAILIEAMTDNRNRTAADLRAAFNKHGGNLGETGCVGWMFNQVGIVTIAAPADEEAFLEVLLEAGADTYELIETEEGTIAEIVTEVTNLEHLATVLKAQHYPVREAESRWVAINMVEISDPEQGRRLLKLMDALEDLDDVQSVTANFAIGDNLLTEMLV.

Belongs to the TACO1 family.

The protein resides in the cytoplasm. The polypeptide is Probable transcriptional regulatory protein Cyan7425_4347 (Cyanothece sp. (strain PCC 7425 / ATCC 29141)).